Here is a 693-residue protein sequence, read N- to C-terminus: Bacterial dynamin-like protein (693 aa).

The Cytoplasmic portion of the chain corresponds to 1-521 (MVNQVATDRF…DNSPGWAKWA (521 aa)). Residues 66–313 (QQGVFRLLVL…QADLDGTGFP (248 aa)) form the Dynamin-type G domain. The segment at 76-83 (GDMKRGKS) is G1 motif. 79–84 (KRGKST) contributes to the GTP binding site. Residues 102-103 (CT) form a G2 motif region. The segment at 180–183 (DSPG) is G3 motif. GTP is bound at residue 235–241 (FLVNAWD). Positions 238–241 (NAWD) are G4 motif. Residue Asn-268 is a region of interest, G5 motif. 292 to 293 (SI) lines the GTP pocket. A middle domain region spans residues 311-571 (GFPKFMDSLN…TAVTGILLGP (261 aa)). Residues 347 to 378 (REAVARRIPLLEQDVNELKKRIDSVEPEFNKL) adopt a coiled-coil conformation. Residues 522–574 (MGLLSLSKGNLAGFALAGAGFDWKNILLNYFTVIGIGGIITAVTGILLGPIGF) lie within the membrane without spanning it. Residues 572–606 (IGFALLGLGVGFLQADQARRELVKTAKKELVKHLP) are paddle domain. Topologically, residues 575–693 (ALLGLGVGFL…AYSNLLAYYS (119 aa)) are cytoplasmic. The interval 607 to 693 (QVAHEQSQVV…AYSNLLAYYS (87 aa)) is GED. Positions 661 to 688 (ESEFNRLKNLQEDVIAQLQKIEAAYSNL) form a coiled coil.

This sequence belongs to the TRAFAC class dynamin-like GTPase superfamily. Dynamin/Fzo/YdjA family. Mitofusin subfamily. As to quaternary structure, homodimer. Self-assembles in the presence of GMP-PNP and liposomes, and probably also in the presence of GTP.

The protein resides in the cell inner membrane. The enzyme catalyses GTP + H2O = GDP + phosphate + H(+). In terms of biological role, dynamin-related GTPase probably involved in membrane remodeling. Lipid and nucleotide-binding are thought to induce a large intramolecular rearrangement, leading to assembly on lipid bilayers and possible membrane curving. In the presence of the non-hydrolyzable GTP analog GMP-PNP self-assembles on a lipid bilayer; this does not stimulate subsequent GTPase activity. Does not bind lipids in the presence of GDP; perhaps GTP hydrolysis disrupts membrane-binding. This Nostoc punctiforme (strain ATCC 29133 / PCC 73102) protein is Bacterial dynamin-like protein.